The chain runs to 233 residues: Large ribosomal subunit protein uL1 (233 aa).

This sequence belongs to the universal ribosomal protein uL1 family. In terms of assembly, part of the 50S ribosomal subunit.

Binds directly to 23S rRNA. The L1 stalk is quite mobile in the ribosome, and is involved in E site tRNA release. In terms of biological role, protein L1 is also a translational repressor protein, it controls the translation of the L11 operon by binding to its mRNA. The chain is Large ribosomal subunit protein uL1 from Shewanella oneidensis (strain ATCC 700550 / JCM 31522 / CIP 106686 / LMG 19005 / NCIMB 14063 / MR-1).